Reading from the N-terminus, the 470-residue chain is MNVVSVVDILSGHVSKNTEITIQGWIRTRRDSKAKISFLDLYDGSCINSLQIIAYDKLHNYKNEILRLTSGCSVIIVGIIVKSIGIKQHVEVIAKNIKILGWIEDPSTYPITAKKHTMEYLREVSHLRPRTNTIGAVARIRDTLSQAIHNFLHKQGFIWIPTPIITACDTEGSSKMFCVSTSETQKILNNPNEKLHHTHDTTYDFFSKKAFLTVSGQLNAEAYACALSKVYTFGPTFRAEYSNTNRHLAEFWMIEPEAAFMTLDDIIILAESLLKNIIRILLEKRSDDIKYLVDKINKNIITILENFSEIKFNHIEYTEAIKLLEICNRKFNNPIHWGTDLFSEHEKYLSEEYFKSPVIIKNFPKNIKAFYMRLNDDNKTVASMDILVPGIGEIIGGSQREERLSKLDQRLQENCLTQENYWWYRDLRRYGTVPHSGFGLGFERLMIYVTGIKNIRDVIPFPRTSKNINF.

Belongs to the class-II aminoacyl-tRNA synthetase family. As to quaternary structure, homodimer.

It is found in the cytoplasm. It catalyses the reaction tRNA(Asn) + L-asparagine + ATP = L-asparaginyl-tRNA(Asn) + AMP + diphosphate + H(+). This is Asparagine--tRNA ligase from Blochmanniella pennsylvanica (strain BPEN).